The chain runs to 250 residues: Ubiquinone/menaquinone biosynthesis C-methyltransferase UbiE (250 aa).

Residues T74, D94, 122–123 (DA), and S139 contribute to the S-adenosyl-L-methionine site.

This sequence belongs to the class I-like SAM-binding methyltransferase superfamily. MenG/UbiE family.

It catalyses the reaction a 2-demethylmenaquinol + S-adenosyl-L-methionine = a menaquinol + S-adenosyl-L-homocysteine + H(+). The enzyme catalyses a 2-methoxy-6-(all-trans-polyprenyl)benzene-1,4-diol + S-adenosyl-L-methionine = a 5-methoxy-2-methyl-3-(all-trans-polyprenyl)benzene-1,4-diol + S-adenosyl-L-homocysteine + H(+). It participates in quinol/quinone metabolism; menaquinone biosynthesis; menaquinol from 1,4-dihydroxy-2-naphthoate: step 2/2. It functions in the pathway cofactor biosynthesis; ubiquinone biosynthesis. Its function is as follows. Methyltransferase required for the conversion of demethylmenaquinol (DMKH2) to menaquinol (MKH2) and the conversion of 2-polyprenyl-6-methoxy-1,4-benzoquinol (DDMQH2) to 2-polyprenyl-3-methyl-6-methoxy-1,4-benzoquinol (DMQH2). In Cereibacter sphaeroides (strain ATCC 17029 / ATH 2.4.9) (Rhodobacter sphaeroides), this protein is Ubiquinone/menaquinone biosynthesis C-methyltransferase UbiE.